A 288-amino-acid chain; its full sequence is Elongation factor Ts (288 aa).

The involved in Mg(2+) ion dislocation from EF-Tu stretch occupies residues threonine 82 to valine 85.

Belongs to the EF-Ts family.

The protein resides in the cytoplasm. In terms of biological role, associates with the EF-Tu.GDP complex and induces the exchange of GDP to GTP. It remains bound to the aminoacyl-tRNA.EF-Tu.GTP complex up to the GTP hydrolysis stage on the ribosome. The protein is Elongation factor Ts of Chlorobium chlorochromatii (strain CaD3).